We begin with the raw amino-acid sequence, 223 residues long: Adenylate kinase 4, mitochondrial (223 aa).

An a ribonucleoside 5'-triphosphate-binding site is contributed by 15 to 20 (GSGKGT). The interval 35 to 64 (SSGHFLRENIKASTEVGEMAKQYIEKSLLV) is NMP. Ser-36 and Arg-41 together coordinate AMP. N6-succinyllysine is present on Lys-60. AMP-binding positions include 62-64 (LLV), 89-92 (GFPR), and Gln-96. The tract at residues 125–162 (RRWIHPPSGRVYNLDFNPPHVHGIDDVTGEPLVQQEDD) is LID. A ribonucleoside 5'-triphosphate-binding positions include Arg-126 and 135-136 (VY). An AMP-binding site is contributed by Arg-170. Position 175 is an N6-acetyllysine (Lys-175). An N6-acetyllysine; alternate mark is found at Lys-179 and Lys-186. Residues Lys-179 and Lys-186 each carry the N6-succinyllysine; alternate modification. Thr-199 lines the a ribonucleoside 5'-triphosphate pocket.

The protein belongs to the adenylate kinase family. AK3 subfamily. In terms of assembly, monomer. Interacts with SLC25A5/ANT2. In terms of tissue distribution, highly expressed in kidney, moderately expressed in heart and liver and weakly expressed in brain.

The protein localises to the mitochondrion matrix. The enzyme catalyses a ribonucleoside 5'-phosphate + ATP = a ribonucleoside 5'-diphosphate + ADP. The catalysed reaction is AMP + ATP = 2 ADP. It carries out the reaction GTP + AMP = GDP + ADP. It catalyses the reaction CMP + ATP = CDP + ADP. The enzyme catalyses GTP + CMP = CDP + GDP. The catalysed reaction is dAMP + ATP = dADP + ADP. It carries out the reaction dCMP + ATP = dCDP + ADP. It catalyses the reaction a 2'-deoxyribonucleoside 5'-diphosphate + ATP = a 2'-deoxyribonucleoside 5'-triphosphate + ADP. The enzyme catalyses a ribonucleoside 5'-diphosphate + ATP = a ribonucleoside 5'-triphosphate + ADP. The catalysed reaction is GDP + ATP = GTP + ADP. It carries out the reaction CDP + GTP = CTP + GDP. It catalyses the reaction CDP + ATP = CTP + ADP. The enzyme catalyses UDP + ATP = UTP + ADP. The catalysed reaction is GTP + UDP = UTP + GDP. It carries out the reaction dADP + GTP = dATP + GDP. It catalyses the reaction dCDP + GTP = dCTP + GDP. The enzyme catalyses dCDP + ATP = dCTP + ADP. The catalysed reaction is dGDP + ATP = dGTP + ADP. It carries out the reaction dTDP + GTP = dTTP + GDP. It catalyses the reaction dTDP + ATP = dTTP + ADP. In terms of biological role, broad-specificity mitochondrial nucleoside phosphate kinase involved in cellular nucleotide homeostasis by catalyzing nucleoside-phosphate interconversions. Similar to other adenylate kinases, preferentially catalyzes the phosphorylation of the nucleoside monophosphate AMP with ATP as phosphate donor to produce ADP. Phosphorylates only AMP when using GTP as phosphate donor. In vitro, can also catalyze the phosphorylation of CMP, dAMP and dCMP and use GTP as an alternate phosphate donor. Moreover, exhibits a diphosphate kinase activity, producing ATP, CTP, GTP, UTP, TTP, dATP, dCTP and dGTP from the corresponding diphosphate substrates with either ATP or GTP as phosphate donors. Plays a role in controlling cellular ATP levels by regulating phosphorylation and activation of the energy sensor protein kinase AMPK. Plays a protective role in the cellular response to oxidative stress. The sequence is that of Adenylate kinase 4, mitochondrial from Homo sapiens (Human).